A 241-amino-acid chain; its full sequence is Co-chaperone protein p23-1 (241 aa).

Residues 2–91 (SRHPEVKWAE…AEPERWNKLL (90 aa)) enclose the CS domain. MGG repeat units lie at residues 129 to 131 (MGG), 132 to 134 (MGG), 135 to 137 (MGG), 138 to 140 (MGG), 141 to 143 (MGG), 144 to 146 (MGG), 147 to 149 (MGG), 150 to 152 (MGG), 162 to 164 (MGG), 165 to 167 (MGG), 168 to 170 (MGG), 171 to 173 (MGG), 180 to 182 (MGG), 183 to 185 (MGG), 186 to 188 (MGG), 189 to 191 (MGG), and 192 to 194 (MGG). Positions 129-194 (MGGMGGMGGM…GMGGMGGMGG (66 aa)) are 17 X 3 AA repeats of M-G-G. Positions 188–241 (GMGGMGGMEEFEDSDDEEETAKSGDKKDDAVKEEGLATEKAPAAEETTSVKEDK) are disordered. Acidic residues predominate over residues 196 to 206 (EEFEDSDDEEE). Residues 207–224 (TAKSGDKKDDAVKEEGLA) show a composition bias toward basic and acidic residues. Over residues 225-234 (TEKAPAAEET) the composition is skewed to low complexity.

It belongs to the p23/wos2 family. Interacts with HSP90 in an ATP-dependent manner. Interacts with HSP90-5, HSP90-6 and HSP90-7. Widely expressed but preferentially in the root meristem.

The protein resides in the cytoplasm. It is found in the nucleus. In terms of biological role, acts as a co-chaperone for HSP90. Controls root development through the modulation of auxin distribution in the root meristem. The protein is Co-chaperone protein p23-1 of Arabidopsis thaliana (Mouse-ear cress).